The sequence spans 197 residues: C4-dicarboxylate transport transcriptional regulatory protein DctR (197 aa).

A Response regulatory domain is found at threonine 4–isoleucine 120. A 4-aspartylphosphate modification is found at aspartate 53. The interval alanine 128–alanine 135 is inter-domain linker. One can recognise an HTH luxR-type domain in the interval valine 136–threonine 197. Positions asparagine 160–serine 179 form a DNA-binding region, H-T-H motif.

Post-translationally, phosphorylated by DctS.

It is found in the cytoplasm. Member of the two-component regulatory system DctS/DctR involved in the transport of C4-dicarboxylates. DctR functions as a transcriptional repressor of genes for C4-dicarboxylate transport. The polypeptide is C4-dicarboxylate transport transcriptional regulatory protein DctR (dctR) (Rhodobacter capsulatus (Rhodopseudomonas capsulata)).